The following is a 360-amino-acid chain: Peptide chain release factor 1 (360 aa).

At Gln235 the chain carries N5-methylglutamine.

Belongs to the prokaryotic/mitochondrial release factor family. Methylated by PrmC. Methylation increases the termination efficiency of RF1.

It localises to the cytoplasm. Its function is as follows. Peptide chain release factor 1 directs the termination of translation in response to the peptide chain termination codons UAG and UAA. The chain is Peptide chain release factor 1 from Leptothrix cholodnii (strain ATCC 51168 / LMG 8142 / SP-6) (Leptothrix discophora (strain SP-6)).